Here is a 34-residue protein sequence, read N- to C-terminus: Toxin GTx1-15 (34 aa).

Disulfide bonds link C2-C17, C9-C23, and C16-C30. F34 carries the post-translational modification Phenylalanine amide.

It belongs to the neurotoxin 10 (Hwtx-1) family. 08 (Gtx1-15) subfamily. Expressed by the venom gland.

The protein resides in the secreted. In terms of biological role, potent voltage-gated sodium channel blocker. Potently inhibits the voltage-gated sodium channels Nav1.7/SCN9A (IC(50)=0.58-10 nM). Also shows a moderate activity on Nav1.1/SCN1A (IC(50)=6 nM), Nav1.2/SCN2A (IC(50)=5-128 nM), Nav1.3/SCN3A (IC(50)=20.3-170 nM), and Nav1.6/SCN8A (IC(50)=17-20.1 nM). Shows an unclear inhibition of Nav1.4/SCN4A (IC(50)=200 nM to &gt;10 uM), Nav1.5/SCN5A (IC(50)=140 nM to &gt;10 uM) and Nav1.8/SCN10A (IC(50)=68-12200 nM). Weakly blocks the low voltage-gated calcium channels Cav3.1/CACNA1G (30% inhibition of the peak current at 9.8 nM). shows moderate affinity for lipid bilayers. In vivo, when tested on the OD1-induced mouse model of Nav1.7/SCN9A-mediated pain, the toxin is effective when co-administered with OD1, but lacks efficacy when delivered systemically. This chain is Toxin GTx1-15, found in Grammostola porteri (Tarantula spider).